The chain runs to 1110 residues: Serine/threonine-protein kinase PknK (1110 aa).

In terms of domain architecture, Protein kinase spans 26–283 (FDNVEEIGRG…TAADVGEELR (258 aa)). Residues 32-40 (IGRGGFGVV) and K55 contribute to the ATP site. D149 functions as the Proton acceptor in the catalytic mechanism. Residues N154 and D167 each coordinate Mg(2+). A phosphothreonine; by autocatalysis mark is found at T179 and T181. The segment at 308–343 (RSPEAHAAHRHTGGGTPTVPTPPTPATKYRPSVPTG) is disordered.

This sequence belongs to the protein kinase superfamily. Ser/Thr protein kinase family. In terms of assembly, forms oligomeric complexes in solution. In terms of processing, can autophosphorylate the carboxyl terminal region in addition to Thr-179 and Thr-181.

The protein localises to the cytoplasm. It is found in the cell membrane. Its subcellular location is the secreted. The protein resides in the cell wall. The catalysed reaction is L-seryl-[protein] + ATP = O-phospho-L-seryl-[protein] + ADP + H(+). It catalyses the reaction L-threonyl-[protein] + ATP = O-phospho-L-threonyl-[protein] + ADP + H(+). Functionally, key microbial factor involved in regulation of early and late events in tuberculosis infection, and in host-pathogen interactions. This is Serine/threonine-protein kinase PknK (pknK) from Mycobacterium tuberculosis (strain CDC 1551 / Oshkosh).